A 349-amino-acid chain; its full sequence is Protein RecA (349 aa).

64–71 (GPESSGKT) is a binding site for ATP. Residues 328 to 349 (NGEIEVEAPSEEEFEDLPLDLK) form a disordered region. The span at 331–349 (IEVEAPSEEEFEDLPLDLK) shows a compositional bias: acidic residues.

The protein belongs to the RecA family.

It localises to the cytoplasm. In terms of biological role, can catalyze the hydrolysis of ATP in the presence of single-stranded DNA, the ATP-dependent uptake of single-stranded DNA by duplex DNA, and the ATP-dependent hybridization of homologous single-stranded DNAs. It interacts with LexA causing its activation and leading to its autocatalytic cleavage. The chain is Protein RecA from Halalkalibacterium halodurans (strain ATCC BAA-125 / DSM 18197 / FERM 7344 / JCM 9153 / C-125) (Bacillus halodurans).